The chain runs to 304 residues: Glutaminase (304 aa).

7 residues coordinate substrate: Ser63, Asn114, Glu158, Asn165, Tyr189, Tyr240, and Val258.

The protein belongs to the glutaminase family. As to quaternary structure, homotetramer.

The catalysed reaction is L-glutamine + H2O = L-glutamate + NH4(+). This chain is Glutaminase, found in Shewanella baltica (strain OS195).